A 197-amino-acid chain; its full sequence is Phospholipid hydroperoxide glutathione peroxidase (197 aa).

Residue Ser-40 is modified to Phosphoserine. Sec-73 is an active-site residue. Sec-73 is a non-standard amino acid (selenocysteine).

The protein belongs to the glutathione peroxidase family. In terms of assembly, monomer. Has a tendency to form higher mass oligomers. Interacts with FUNDC1; this interaction promotes GPX4 recruitment into mitochondria through TOM/TIM complex where it is degraded by mitophagy.

It is found in the mitochondrion. It localises to the cytoplasm. It carries out the reaction a hydroperoxy polyunsaturated fatty acid + 2 glutathione = a hydroxy polyunsaturated fatty acid + glutathione disulfide + H2O. The catalysed reaction is 2 glutathione + H2O2 = glutathione disulfide + 2 H2O. The enzyme catalyses tert-butyl hydroperoxide + 2 glutathione = tert-butanol + glutathione disulfide + H2O. It catalyses the reaction cumene hydroperoxide + 2 glutathione = 2-phenylpropan-2-ol + glutathione disulfide + H2O. It carries out the reaction (9S)-hydroperoxy-(10E,12Z)-octadecadienoate + 2 glutathione = (9S)-hydroxy-(10E,12Z)-octadecadienoate + glutathione disulfide + H2O. The catalysed reaction is (13S)-hydroperoxy-(9Z,11E)-octadecadienoate + 2 glutathione = (13S)-hydroxy-(9Z,11E)-octadecadienoate + glutathione disulfide + H2O. The enzyme catalyses (5S)-hydroperoxy-(6E,8Z,11Z,14Z)-eicosatetraenoate + 2 glutathione = (5S)-hydroxy-(6E,8Z,11Z,14Z)-eicosatetraenoate + glutathione disulfide + H2O. It catalyses the reaction (12R)-hydroperoxy-(5Z,8Z,10E,14Z)-eicosatetraenoate + 2 glutathione = (12R)-hydroxy-(5Z,8Z,10E,14Z)-eicosatetraenoate + glutathione disulfide + H2O. It carries out the reaction (12S)-hydroperoxy-(5Z,8Z,10E,14Z)-eicosatetraenoate + 2 glutathione = (12S)-hydroxy-(5Z,8Z,10E,14Z)-eicosatetraenoate + glutathione disulfide + H2O. The catalysed reaction is (15S)-hydroperoxy-(5Z,8Z,11Z,13E)-eicosatetraenoate + 2 glutathione = (15S)-hydroxy-(5Z,8Z,11Z,13E)-eicosatetraenoate + glutathione disulfide + H2O. The enzyme catalyses (5S)-hydroperoxy-(6E,8Z,11Z,14Z,17Z)-eicosapentaenoate + 2 glutathione = (5S)-hydroxy-(6E,8Z,11Z,14Z,17Z)-eicosapentaenoate + glutathione disulfide + H2O. It catalyses the reaction (12S)-hydroperoxy-(5Z,8Z,10E,14Z,17Z)-eicosapentaenoate + 2 glutathione = (12S)-hydroxy-(5Z,8Z,10E,14Z,17Z)-eicosapentaenoate + glutathione disulfide + H2O. It carries out the reaction (15S)-hydroperoxy-(5Z,8Z,11Z,13E,17Z)-eicosapentaenoate + 2 glutathione = (15S)-hydroxy-(5Z,8Z,11Z,13E,17Z)-eicosapentaenoate + glutathione disulfide + H2O. The catalysed reaction is (15S)-hydroperoxy-(11Z,13E)-eicosadienoate + 2 glutathione = (15S)-hydroxy-(11Z,13E)-eicosadienoate + glutathione disulfide + H2O. The enzyme catalyses (17S)-hydroperoxy-(4Z,7Z,10Z,13Z,15E,19Z)-docosahexaenoate + 2 glutathione = (17S)-hydroxy-(4Z,7Z,10Z,13Z,15E,19Z)-docosahexaenoate + glutathione disulfide + H2O. It catalyses the reaction a hydroperoxy-1,2-diacyl-glycero-3-phosphocholine + 2 glutathione = a hydroxy-1,2-diacyl-glycero-3-phosphocholine + glutathione disulfide + H2O. Essential antioxidant peroxidase that directly reduces phospholipid hydroperoxide even if they are incorporated in membranes and lipoproteins. Can also reduce fatty acid hydroperoxide, cholesterol hydroperoxide and thymine hydroperoxide. Plays a key role in protecting cells from oxidative damage by preventing membrane lipid peroxidation. Required to prevent cells from ferroptosis, a non-apoptotic cell death resulting from an iron-dependent accumulation of lipid reactive oxygen species. The presence of selenocysteine (Sec) versus Cys at the active site is essential for life: it provides resistance to overoxidation and prevents cells against ferroptosis. The presence of Sec at the active site is also essential for the survival of a specific type of parvalbumin-positive interneurons, thereby preventing against fatal epileptic seizures. May be required to protect cells from the toxicity of ingested lipid hydroperoxides. Required for normal sperm development and male fertility. Essential for maturation and survival of photoreceptor cells. Plays a role in a primary T-cell response to viral and parasitic infection by protecting T-cells from ferroptosis and by supporting T-cell expansion. Plays a role of glutathione peroxidase in platelets in the arachidonic acid metabolism. Reduces hydroperoxy ester lipids formed by a 15-lipoxygenase that may play a role as down-regulator of the cellular 15-lipoxygenase pathway. Can also reduce small soluble hydroperoxides such as H2O2, cumene hydroperoxide and tert-butyl hydroperoxide. The polypeptide is Phospholipid hydroperoxide glutathione peroxidase (Hylobates lar (Lar gibbon)).